The chain runs to 344 residues: L-rhamnose-proton symporter (344 aa).

10 helical membrane-spanning segments follow: residues 4–24 (AITM…CFYA), 38–58 (WSVG…ALLL), 68–88 (FSLS…IGNI), 101–121 (MGIG…TPII), 137–157 (TLLG…AGQL), 175–195 (LVLA…MNAA), 214–234 (LPSY…FCFI), 259–279 (VLLS…YAWG), 290–310 (ISWM…GLVL), and 323–343 (VLSL…IGMA).

It belongs to the L-rhamnose transporter (TC 2.A.7.6) family.

Its subcellular location is the cell inner membrane. It carries out the reaction L-rhamnopyranose(in) + H(+)(in) = L-rhamnopyranose(out) + H(+)(out). In terms of biological role, uptake of L-rhamnose across the cytoplasmic membrane with the concomitant transport of protons into the cell (symport system). The protein is L-rhamnose-proton symporter of Shigella boydii serotype 18 (strain CDC 3083-94 / BS512).